The sequence spans 234 residues: ATP-dependent dethiobiotin synthetase BioD (234 aa).

12–17 (GAGKTI) contacts ATP. T16 is a binding site for Mg(2+). K39 is a catalytic residue. T43 serves as a coordination point for substrate. Residues D47, 108–111 (EGLG), 168–169 (SC), and 200–202 (PYL) each bind ATP. The Mg(2+) site is built by D47 and E108.

Belongs to the dethiobiotin synthetase family. Homodimer. The cofactor is Mg(2+).

The protein localises to the cytoplasm. It carries out the reaction (7R,8S)-7,8-diammoniononanoate + CO2 + ATP = (4R,5S)-dethiobiotin + ADP + phosphate + 3 H(+). It catalyses the reaction (7R,8S)-8-amino-7-(carboxyamino)nonanoate + ATP = (4R,5S)-dethiobiotin + ADP + phosphate + H(+). It functions in the pathway cofactor biosynthesis; biotin biosynthesis; biotin from 7,8-diaminononanoate: step 1/2. In terms of biological role, catalyzes a mechanistically unusual reaction, the ATP-dependent insertion of CO2 between the N7 and N8 nitrogen atoms of 7,8-diaminopelargonic acid (DAPA, also called 7,8-diammoniononanoate) to form a ureido ring. This cyanobacterium does not encode bioA (which catalyzes the formation of the precursor for this reaction in the cannonical pathway), instead it encodes bioU, which replaces bioA and also performs the first half of the cannonical BioD reaction. Thus in this organism BioD has a different substrate. The polypeptide is ATP-dependent dethiobiotin synthetase BioD (Rippkaea orientalis (strain PCC 8801 / RF-1) (Cyanothece sp. (strain PCC 8801))).